Here is a 614-residue protein sequence, read N- to C-terminus: MSKVIGIDLGTTNSCIAILEGDEPKVIQNPEGARTTPSVVAFKNDETQVGEVAKRQAITNPNTIQSIKRHMGTDYKVDVDGKSYTPQEISAMVLQNLKSTAEDYLGESVDKAVITVPAYFNDSERQATKDAGKIAGLEVERIINEPTAAALAYGLDKTEQDQKVLVFDLGGGTFDVSILELGDGVFEVLSTAGDNKLGGDDFDQVIIDHLVAEFKKENSVDLSKDKMALQRLKDAAEKAKKDLSGVSQTQISLPFISAGENGPLHLELTLTRSKFEELADSLIRRTMEPTRQAMKDAGLSSSDIDEVILVGGSTRIPAVQEAVKKEVGKDPHKGVNPDEVVAMGAAIQGGVITGDVKDVVLLDVTPLSLGIEIMGGRMNTLIERNTTIPTSKSQVYSTAADNQPAVDIHVLQGERPMAADNKTLGRFQLTDIPAAPRGVPQIEVTFDIDKNGIVNVTAKDLGTNKEQNITIQSSSALSDDEIDRMVKDAEENAEADKKRREESDLRNEADSLVFQVEKTITDLGENISEEDKQNAEDKKEALKSALEGEDIDDIKAKKEDLEKVVQDLSTKVYEQAAQAQQQAQGEDANASQDSNVEDADFKEVKDDDNQDNQK.

Threonine 173 bears the Phosphothreonine; by autocatalysis mark. Basic and acidic residues-rich tracts occupy residues 490–509 (EENA…RNEA) and 529–542 (EEDK…KEAL). Disordered regions lie at residues 490–510 (EENA…NEAD), 524–555 (GENI…DDIK), and 575–614 (QAAQ…DNQK). Low complexity predominate over residues 575–584 (QAAQAQQQAQ). Over residues 599-614 (ADFKEVKDDDNQDNQK) the composition is skewed to basic and acidic residues.

This sequence belongs to the heat shock protein 70 family.

Functionally, acts as a chaperone. In Staphylococcus saprophyticus subsp. saprophyticus (strain ATCC 15305 / DSM 20229 / NCIMB 8711 / NCTC 7292 / S-41), this protein is Chaperone protein DnaK.